We begin with the raw amino-acid sequence, 478 residues long: Glycogen synthase (478 aa).

ADP-alpha-D-glucose is bound at residue Lys-15.

Belongs to the glycosyltransferase 1 family. Bacterial/plant glycogen synthase subfamily.

It carries out the reaction [(1-&gt;4)-alpha-D-glucosyl](n) + ADP-alpha-D-glucose = [(1-&gt;4)-alpha-D-glucosyl](n+1) + ADP + H(+). The protein operates within glycan biosynthesis; glycogen biosynthesis. In terms of biological role, synthesizes alpha-1,4-glucan chains using ADP-glucose. The protein is Glycogen synthase of Clostridium botulinum (strain Alaska E43 / Type E3).